We begin with the raw amino-acid sequence, 329 residues long: Cytochrome f (329 aa).

The first 44 residues, 1 to 44, serve as a signal peptide directing secretion; sequence MKRNIIFLVIHQFENLTMKKKQNIFFIFLLTVFFNFTVNSNVSA. Positions 45, 65, 68, and 69 each coordinate heme. A helical membrane pass occupies residues 295-315; sequence VQGLIIFLITIFITQLFLVLK.

It belongs to the cytochrome f family. The 4 large subunits of the cytochrome b6-f complex are cytochrome b6, subunit IV (17 kDa polypeptide, petD), cytochrome f and the Rieske protein, while the 4 small subunits are PetG, PetL, PetM and PetN. The complex functions as a dimer. Heme serves as cofactor.

It is found in the plastid. The protein localises to the chloroplast thylakoid membrane. Its function is as follows. Component of the cytochrome b6-f complex, which mediates electron transfer between photosystem II (PSII) and photosystem I (PSI), cyclic electron flow around PSI, and state transitions. In Tupiella akineta (Green alga), this protein is Cytochrome f.